The following is a 455-amino-acid chain: Growth/differentiation factor 9 (455 aa).

A signal peptide spans 1–24; the sequence is MALPNKFLLWFYCFAWLCFPVSLG. Positions 25–320 are excised as a propeptide; sequence SQASGGDAQI…GRSSHHRHRR (296 aa). Asn106, Asn163, Asn236, Asn255, and Asn269 each carry an N-linked (GlcNAc...) asparagine glycan. The segment at 305–328 is disordered; that stretch reads EDAAEDGRSSHHRHRRGQETVSSE. Residue Asn339 is glycosylated (N-linked (GlcNAc...) asparagine). 3 disulfides stabilise this stretch: Cys354/Cys420, Cys383/Cys452, and Cys387/Cys454.

It belongs to the TGF-beta family. As to quaternary structure, homodimer or heterodimer (Potential). But, in contrast to other members of this family, cannot be disulfide-linked. In terms of processing, phosphorylated; phosphorylation is critical for GDF9 function.

It is found in the secreted. In terms of biological role, required for ovarian folliculogenesis. This is Growth/differentiation factor 9 (GDF9) from Papio anubis (Olive baboon).